The primary structure comprises 454 residues: Pup--protein ligase (454 aa).

Glutamate 9 is a binding site for Mg(2+). Arginine 53 lines the ATP pocket. Residue tyrosine 55 coordinates Mg(2+). The Proton acceptor role is filled by aspartate 57. Residue glutamate 63 coordinates Mg(2+). ATP is bound by residues threonine 66 and tryptophan 420.

This sequence belongs to the Pup ligase/Pup deamidase family. Pup-conjugating enzyme subfamily.

It catalyses the reaction ATP + [prokaryotic ubiquitin-like protein]-L-glutamate + [protein]-L-lysine = ADP + phosphate + N(6)-([prokaryotic ubiquitin-like protein]-gamma-L-glutamyl)-[protein]-L-lysine.. The protein operates within protein degradation; proteasomal Pup-dependent pathway. It participates in protein modification; protein pupylation. Catalyzes the covalent attachment of the prokaryotic ubiquitin-like protein modifier Pup to the proteasomal substrate proteins, thereby targeting them for proteasomal degradation. This tagging system is termed pupylation. The ligation reaction involves the side-chain carboxylate of the C-terminal glutamate of Pup and the side-chain amino group of a substrate lysine. This is Pup--protein ligase from Paenarthrobacter aurescens (strain TC1).